Reading from the N-terminus, the 221-residue chain is Probable chemoreceptor glutamine deamidase CheD 1 (221 aa).

The protein belongs to the CheD family.

The enzyme catalyses L-glutaminyl-[protein] + H2O = L-glutamyl-[protein] + NH4(+). Functionally, probably deamidates glutamine residues to glutamate on methyl-accepting chemotaxis receptors (MCPs), playing an important role in chemotaxis. The protein is Probable chemoreceptor glutamine deamidase CheD 1 of Methanosarcina mazei (strain ATCC BAA-159 / DSM 3647 / Goe1 / Go1 / JCM 11833 / OCM 88) (Methanosarcina frisia).